A 219-amino-acid polypeptide reads, in one-letter code: Ribose-5-phosphate isomerase A (219 aa).

Residues 28–31 (SGST), 81–84 (DGAD), and 94–97 (KGGG) each bind substrate. Catalysis depends on E103, which acts as the Proton acceptor. K121 contributes to the substrate binding site.

The protein belongs to the ribose 5-phosphate isomerase family. In terms of assembly, homodimer.

It carries out the reaction aldehydo-D-ribose 5-phosphate = D-ribulose 5-phosphate. It functions in the pathway carbohydrate degradation; pentose phosphate pathway; D-ribose 5-phosphate from D-ribulose 5-phosphate (non-oxidative stage): step 1/1. In terms of biological role, catalyzes the reversible conversion of ribose-5-phosphate to ribulose 5-phosphate. The chain is Ribose-5-phosphate isomerase A from Mannheimia succiniciproducens (strain KCTC 0769BP / MBEL55E).